Here is a 659-residue protein sequence, read N- to C-terminus: A-type ATP synthase subunit I (659 aa).

8 consecutive transmembrane segments (helical) span residues 376–396, 415–435, 460–480, 489–509, 513–533, 542–562, 566–586, and 590–610; these read FFFG…VISA, IMLW…SYCG, VMAL…GFIV, AAIL…LFAL, LGIP…LFVV, MAVL…LSYA, ALAL…NMVW, and IGPI…GHIF.

This sequence belongs to the V-ATPase 116 kDa subunit family. As to quaternary structure, has multiple subunits with at least A(3), B(3), C, D, E, F, H, I and proteolipid K(x).

It localises to the cell membrane. Its function is as follows. Component of the A-type ATP synthase that produces ATP from ADP in the presence of a proton gradient across the membrane. In Pyrococcus abyssi (strain GE5 / Orsay), this protein is A-type ATP synthase subunit I.